We begin with the raw amino-acid sequence, 986 residues long: Vacuolar membrane protease (986 aa).

The Cytoplasmic portion of the chain corresponds to 1-16; that stretch reads MAPLRLSRANPLAFAR. Residues 17–37 form a helical membrane-spanning segment; it reads WPVTLITAVVYLAFLIPLLIV. Topologically, residues 38 to 392 are vacuolar; sequence HHVVPSPPTA…TTFVLFELHT (355 aa). Asn121 is a glycosylation site (N-linked (GlcNAc...) asparagine). Residues His176 and Asp188 each coordinate Zn(2+). Glu222 functions as the Proton acceptor in the catalytic mechanism. Residues Glu223, Glu248, and His321 each contribute to the Zn(2+) site. Residues 393–413 form a helical membrane-spanning segment; sequence LFALSVTLLVVAPLALLVTGI. Over 414–444 the chain is Cytoplasmic; it reads ALTRADKMYLFRTSAKADESLDSVPLQGLRG. A helical transmembrane segment spans residues 445–465; sequence FFRFPFLFAIPTAVTVGLAYL. At 466–475 the chain is on the vacuolar side; that stretch reads VTKVNPLIIH. A helical transmembrane segment spans residues 476–496; that stretch reads SSEYAVWSMMLSAWTFLAWFV. At 497–510 the chain is on the cytoplasmic side; sequence SRMADFARPTALHR. The chain crosses the membrane as a helical span at residues 511 to 531; the sequence is IYTLTWMFVLAWVLLVISTVY. Over 532 to 535 the chain is Vacuolar; sequence QNQR. A helical transmembrane segment spans residues 536 to 556; the sequence is GLAGSYSVFFFFSGTFLATWI. Residues 557-668 are Cytoplasmic-facing; it reads SYLELFSLPR…SASLPTWTWT (112 aa). Residues 573 to 585 are compositionally biased toward polar residues; sequence QNRPTSRRASSYG. The interval 573-622 is disordered; that stretch reads QNRPTSRRASSYGGSRLGTASGEDHEEDDHDAEEEEEEQEPTESTSLLGG. Over residues 596-613 the composition is skewed to acidic residues; it reads DHEEDDHDAEEEEEEQEP. Residues 669 to 689 form a helical membrane-spanning segment; the sequence is LQFLLMAPLVLIMVGPLALLL. Residues 690-704 lie on the Vacuolar side of the membrane; sequence TSALHQTGQDGSSSL. Residues 705 to 725 traverse the membrane as a helical segment; it reads FIYVAIAALTTFLLTPLLPFI. Over 726 to 732 the chain is Cytoplasmic; the sequence is HRHTYHL. The helical transmembrane segment at 733–753 threads the bilayer; it reads PVFLLLVFLGTLIYNLVAFPF. Topologically, residues 754 to 986 are vacuolar; it reads SPTNRLKLFF…LVEGWKGFSI (233 aa). Residues Asn799, Asn840, and Asn948 are each glycosylated (N-linked (GlcNAc...) asparagine). Residues 840 to 859 are disordered; the sequence is NTTDDKEGDEDTHHPRKARI.

Belongs to the peptidase M28 family. It depends on Zn(2+) as a cofactor.

The protein localises to the vacuole membrane. In terms of biological role, may be involved in vacuolar sorting and osmoregulation. The sequence is that of Vacuolar membrane protease from Aspergillus niger (strain ATCC MYA-4892 / CBS 513.88 / FGSC A1513).